The sequence spans 250 residues: Small ribosomal subunit protein uS2 (250 aa).

The interval 225-250 is disordered; that stretch reads GAQGGRQARGEDLGAAVEAPSEDALA.

This sequence belongs to the universal ribosomal protein uS2 family.

The protein is Small ribosomal subunit protein uS2 of Rhizorhabdus wittichii (strain DSM 6014 / CCUG 31198 / JCM 15750 / NBRC 105917 / EY 4224 / RW1) (Sphingomonas wittichii).